The sequence spans 295 residues: Xyloglucan endotransglucosylase/hydrolase (295 aa).

The signal sequence occupies residues 1 to 23 (MAVSSTPWALVALFLMASSTVMA). The region spanning 25 to 222 (PPRKAIDVPF…WANAPFIASY (198 aa)) is the GH16 domain. Glutamate 108 functions as the Nucleophile in the catalytic mechanism. Glutamate 112 (proton donor) is an active-site residue. Glutamate 112 serves as a coordination point for xyloglucan. N-linked (GlcNAc...) asparagine glycosylation is present at asparagine 116. Xyloglucan contacts are provided by residues 125–127 (QTN), 135–137 (NRE), 201–202 (DW), and glycine 206. Intrachain disulfides connect cysteine 230–cysteine 239 and cysteine 276–cysteine 289. Position 281 (arginine 281) interacts with xyloglucan.

It belongs to the glycosyl hydrolase 16 family. XTH group 1 subfamily. Contains at least one intrachain disulfide bond essential for its enzymatic activity. Post-translationally, the N-glycan consists of an (GlcNAc)2(Hex)6 oligosaccharide; not essential for its enzymatic activity.

The protein localises to the secreted. It localises to the cell wall. It is found in the extracellular space. The protein resides in the apoplast. The catalysed reaction is breaks a beta-(1-&gt;4) bond in the backbone of a xyloglucan and transfers the xyloglucanyl segment on to O-4 of the non-reducing terminal glucose residue of an acceptor, which can be a xyloglucan or an oligosaccharide of xyloglucan.. In terms of biological role, catalyzes xyloglucan endohydrolysis (XEH) and/or endotransglycosylation (XET). Cleaves and religates xyloglucan polymers, an essential constituent of the primary cell wall, and thereby participates in cell wall construction of growing tissues. This Brassica oleracea var. botrytis (Cauliflower) protein is Xyloglucan endotransglucosylase/hydrolase (XET16A).